A 502-amino-acid chain; its full sequence is Probable cytosol aminopeptidase 2 (502 aa).

Lys269 and Asp274 together coordinate Mn(2+). Lys281 is a catalytic residue. Positions 292, 351, and 353 each coordinate Mn(2+). Residue Arg355 is part of the active site.

It belongs to the peptidase M17 family. Mn(2+) serves as cofactor.

The protein localises to the cytoplasm. It catalyses the reaction Release of an N-terminal amino acid, Xaa-|-Yaa-, in which Xaa is preferably Leu, but may be other amino acids including Pro although not Arg or Lys, and Yaa may be Pro. Amino acid amides and methyl esters are also readily hydrolyzed, but rates on arylamides are exceedingly low.. The enzyme catalyses Release of an N-terminal amino acid, preferentially leucine, but not glutamic or aspartic acids.. Functionally, presumably involved in the processing and regular turnover of intracellular proteins. Catalyzes the removal of unsubstituted N-terminal amino acids from various peptides. This Shewanella oneidensis (strain ATCC 700550 / JCM 31522 / CIP 106686 / LMG 19005 / NCIMB 14063 / MR-1) protein is Probable cytosol aminopeptidase 2 (pepA2).